Reading from the N-terminus, the 213-residue chain is Probable nicotinate-nucleotide adenylyltransferase (213 aa).

The protein belongs to the NadD family.

It carries out the reaction nicotinate beta-D-ribonucleotide + ATP + H(+) = deamido-NAD(+) + diphosphate. The protein operates within cofactor biosynthesis; NAD(+) biosynthesis; deamido-NAD(+) from nicotinate D-ribonucleotide: step 1/1. Functionally, catalyzes the reversible adenylation of nicotinate mononucleotide (NaMN) to nicotinic acid adenine dinucleotide (NaAD). This chain is Probable nicotinate-nucleotide adenylyltransferase, found in Shigella boydii serotype 4 (strain Sb227).